The sequence spans 170 residues: tRNA-splicing endonuclease (170 aa).

Catalysis depends on residues Tyr110, His116, and Lys147.

The protein belongs to the tRNA-intron endonuclease family. Archaeal short subfamily. Homotetramer; although the tetramer contains four active sites, only two participate in the cleavage. Therefore, it should be considered as a dimer of dimers.

It carries out the reaction pretRNA = a 3'-half-tRNA molecule with a 5'-OH end + a 5'-half-tRNA molecule with a 2',3'-cyclic phosphate end + an intron with a 2',3'-cyclic phosphate and a 5'-hydroxyl terminus.. In terms of biological role, endonuclease that removes tRNA introns. Cleaves pre-tRNA at the 5'- and 3'-splice sites to release the intron. The products are an intron and two tRNA half-molecules bearing 2',3' cyclic phosphate and 5'-OH termini. Recognizes a pseudosymmetric substrate in which 2 bulged loops of 3 bases are separated by a stem of 4 bp. In Pyrococcus abyssi (strain GE5 / Orsay), this protein is tRNA-splicing endonuclease.